The primary structure comprises 120 residues: Large ribosomal subunit protein uL18 (120 aa).

The protein belongs to the universal ribosomal protein uL18 family. In terms of assembly, part of the 50S ribosomal subunit; part of the 5S rRNA/L5/L18/L25 subcomplex. Contacts the 5S and 23S rRNAs.

This is one of the proteins that bind and probably mediate the attachment of the 5S RNA into the large ribosomal subunit, where it forms part of the central protuberance. The sequence is that of Large ribosomal subunit protein uL18 from Bradyrhizobium sp. (strain BTAi1 / ATCC BAA-1182).